The primary structure comprises 270 residues: Formamidopyrimidine-DNA glycosylase (270 aa).

The active-site Schiff-base intermediate with DNA is P2. E3 (proton donor) is an active-site residue. The active-site Proton donor; for beta-elimination activity is the K58. 3 residues coordinate DNA: H90, R109, and R152. Residues 237–270 form an FPG-type zinc finger; it reads RVYGREGEPCHCGTVIRRRVDGGRSTFYCPKCQK. The active-site Proton donor; for delta-elimination activity is R260.

This sequence belongs to the FPG family. As to quaternary structure, monomer. Zn(2+) serves as cofactor.

It carries out the reaction Hydrolysis of DNA containing ring-opened 7-methylguanine residues, releasing 2,6-diamino-4-hydroxy-5-(N-methyl)formamidopyrimidine.. The enzyme catalyses 2'-deoxyribonucleotide-(2'-deoxyribose 5'-phosphate)-2'-deoxyribonucleotide-DNA = a 3'-end 2'-deoxyribonucleotide-(2,3-dehydro-2,3-deoxyribose 5'-phosphate)-DNA + a 5'-end 5'-phospho-2'-deoxyribonucleoside-DNA + H(+). Its function is as follows. Involved in base excision repair of DNA damaged by oxidation or by mutagenic agents. Acts as a DNA glycosylase that recognizes and removes damaged bases. Has a preference for oxidized purines, such as 7,8-dihydro-8-oxoguanine (8-oxoG). Has AP (apurinic/apyrimidinic) lyase activity and introduces nicks in the DNA strand. Cleaves the DNA backbone by beta-delta elimination to generate a single-strand break at the site of the removed base with both 3'- and 5'-phosphates. The polypeptide is Formamidopyrimidine-DNA glycosylase (Rhizorhabdus wittichii (strain DSM 6014 / CCUG 31198 / JCM 15750 / NBRC 105917 / EY 4224 / RW1) (Sphingomonas wittichii)).